The chain runs to 376 residues: Cytoplasmic tRNA 2-thiolation protein 2 (376 aa).

The protein belongs to the CTU2/NCS2 family.

It localises to the cytoplasm. It functions in the pathway tRNA modification; 5-methoxycarbonylmethyl-2-thiouridine-tRNA biosynthesis. Plays a central role in 2-thiolation of mcm(5)S(2)U at tRNA wobble positions of tRNA(Lys), tRNA(Glu) and tRNA(Gln). May act by forming a heterodimer with NCS6 that ligates sulfur from thiocarboxylated URM1 onto the uridine of tRNAs at wobble position. Prior mcm(5) tRNA modification by the elongator complex is required for 2-thiolation. May also be involved in protein urmylation. This Coccidioides immitis (strain RS) (Valley fever fungus) protein is Cytoplasmic tRNA 2-thiolation protein 2.